A 251-amino-acid chain; its full sequence is UPF0309 protein SGR_3073 (251 aa).

The 186-residue stretch at 36 to 221 (VADTVASGGR…EQLVARGIEP (186 aa)) folds into the SIS domain.

The protein belongs to the UPF0309 family.

The sequence is that of UPF0309 protein SGR_3073 from Streptomyces griseus subsp. griseus (strain JCM 4626 / CBS 651.72 / NBRC 13350 / KCC S-0626 / ISP 5235).